The primary structure comprises 342 residues: UDP-N-acetylenolpyruvoylglucosamine reductase (342 aa).

In terms of domain architecture, FAD-binding PCMH-type spans 17–192 (RFEAAARYAA…AEVTFALPVD (176 aa)). Arginine 168 is a catalytic residue. Serine 242 serves as the catalytic Proton donor. Glutamate 338 is an active-site residue.

This sequence belongs to the MurB family. Requires FAD as cofactor.

The protein localises to the cytoplasm. The catalysed reaction is UDP-N-acetyl-alpha-D-muramate + NADP(+) = UDP-N-acetyl-3-O-(1-carboxyvinyl)-alpha-D-glucosamine + NADPH + H(+). The protein operates within cell wall biogenesis; peptidoglycan biosynthesis. Functionally, cell wall formation. The chain is UDP-N-acetylenolpyruvoylglucosamine reductase from Ralstonia nicotianae (strain ATCC BAA-1114 / GMI1000) (Ralstonia solanacearum).